A 186-amino-acid chain; its full sequence is Ribosome-recycling factor (186 aa).

This sequence belongs to the RRF family.

The protein resides in the cytoplasm. Responsible for the release of ribosomes from messenger RNA at the termination of protein biosynthesis. May increase the efficiency of translation by recycling ribosomes from one round of translation to another. This is Ribosome-recycling factor from Burkholderia thailandensis (strain ATCC 700388 / DSM 13276 / CCUG 48851 / CIP 106301 / E264).